The following is a 90-amino-acid chain: Probable Fe(2+)-trafficking protein (90 aa).

This sequence belongs to the Fe(2+)-trafficking protein family.

In terms of biological role, could be a mediator in iron transactions between iron acquisition and iron-requiring processes, such as synthesis and/or repair of Fe-S clusters in biosynthetic enzymes. This chain is Probable Fe(2+)-trafficking protein, found in Leptothrix cholodnii (strain ATCC 51168 / LMG 8142 / SP-6) (Leptothrix discophora (strain SP-6)).